Here is a 381-residue protein sequence, read N- to C-terminus: L-lactate dehydrogenase (381 aa).

An FMN hydroxy acid dehydrogenase domain is found at M1–K380. Residue Y24 coordinates substrate. FMN contacts are provided by S106 and Q127. Residue Y129 participates in substrate binding. Position 155 (T155) interacts with FMN. R164 contributes to the substrate binding site. K251 contacts FMN. Residue H275 is the Proton acceptor of the active site. R278 is a substrate binding site. D306 to R330 provides a ligand contact to FMN.

Belongs to the FMN-dependent alpha-hydroxy acid dehydrogenase family. FMN is required as a cofactor.

It localises to the cell inner membrane. The enzyme catalyses (S)-lactate + A = pyruvate + AH2. In terms of biological role, catalyzes the conversion of L-lactate to pyruvate. Is coupled to the respiratory chain. The protein is L-lactate dehydrogenase of Haemophilus influenzae (strain ATCC 51907 / DSM 11121 / KW20 / Rd).